Consider the following 527-residue polypeptide: Bifunctional purine biosynthesis protein PurH (527 aa).

In terms of domain architecture, MGS-like spans 1–149 (MTADLLPVRR…KNFARVAVAT (149 aa)).

This sequence belongs to the PurH family.

It carries out the reaction (6R)-10-formyltetrahydrofolate + 5-amino-1-(5-phospho-beta-D-ribosyl)imidazole-4-carboxamide = 5-formamido-1-(5-phospho-D-ribosyl)imidazole-4-carboxamide + (6S)-5,6,7,8-tetrahydrofolate. It catalyses the reaction IMP + H2O = 5-formamido-1-(5-phospho-D-ribosyl)imidazole-4-carboxamide. It functions in the pathway purine metabolism; IMP biosynthesis via de novo pathway; 5-formamido-1-(5-phospho-D-ribosyl)imidazole-4-carboxamide from 5-amino-1-(5-phospho-D-ribosyl)imidazole-4-carboxamide (10-formyl THF route): step 1/1. The protein operates within purine metabolism; IMP biosynthesis via de novo pathway; IMP from 5-formamido-1-(5-phospho-D-ribosyl)imidazole-4-carboxamide: step 1/1. In Stenotrophomonas maltophilia (strain K279a), this protein is Bifunctional purine biosynthesis protein PurH.